We begin with the raw amino-acid sequence, 383 residues long: tRNA pseudouridine synthase B (383 aa).

Asp-53 (nucleophile) is an active-site residue.

The protein belongs to the pseudouridine synthase TruB family. Type 1 subfamily.

It catalyses the reaction uridine(55) in tRNA = pseudouridine(55) in tRNA. Responsible for synthesis of pseudouridine from uracil-55 in the psi GC loop of transfer RNAs. The protein is tRNA pseudouridine synthase B of Tropheryma whipplei (strain TW08/27) (Whipple's bacillus).